A 318-amino-acid polypeptide reads, in one-letter code: Protein LplB (318 aa).

6 helical membrane-spanning segments follow: residues 35-55 (LIPG…GVLI), 94-114 (LMLA…LALL), 130-150 (FIYV…FVFF), 182-202 (IVMQ…LAAL), 236-256 (IIVL…EQVY), and 289-309 (AVGL…NYIA). The region spanning 90–305 (LRNTLMLASL…VVGIILIFGA (216 aa)) is the ABC transmembrane type-1 domain.

It belongs to the binding-protein-dependent transport system permease family. MalFG subfamily.

The protein resides in the cell membrane. In Bacillus subtilis (strain 168), this protein is Protein LplB (lplB).